A 372-amino-acid polypeptide reads, in one-letter code: G patch domain and ankyrin repeat-containing protein 1 (372 aa).

Residues 74-110 (DSSSSKPQRAEPMRERKKKRRRVTREPAAAGVPRQGR) are disordered. ANK repeat units lie at residues 124 to 155 (LAAQ…ARDA) and 156 to 186 (FWWT…WVGV). Disordered stretches follow at residues 211 to 233 (RESH…SSQF) and 251 to 271 (AHLL…GVPT). The span at 220–233 (PENQNRSTPSSSQF) shows a compositional bias: polar residues. Positions 271 to 317 (TSSPGFRLLLRGGWEPGMGLGPRGEGRANPIPTILKRDQEGLGYRSP) constitute a G-patch domain. A Glycyl lysine isopeptide (Lys-Gly) (interchain with G-Cter in SUMO2) cross-link involves residue K306. Composition is skewed to basic and acidic residues over residues 330–340 (TRAVSGRERVP) and 348–357 (RENRRQEEKG). A disordered region spans residues 330 to 357 (TRAVSGRERVPRVATLSQRENRRQEEKG).

This chain is G patch domain and ankyrin repeat-containing protein 1 (Gpank1), found in Mus musculus (Mouse).